Here is a 402-residue protein sequence, read N- to C-terminus: NADH-quinone oxidoreductase subunit D (402 aa).

This sequence belongs to the complex I 49 kDa subunit family. NDH-1 is composed of 14 different subunits. Subunits NuoB, C, D, E, F, and G constitute the peripheral sector of the complex.

The protein resides in the cell inner membrane. The catalysed reaction is a quinone + NADH + 5 H(+)(in) = a quinol + NAD(+) + 4 H(+)(out). Its function is as follows. NDH-1 shuttles electrons from NADH, via FMN and iron-sulfur (Fe-S) centers, to quinones in the respiratory chain. The immediate electron acceptor for the enzyme in this species is believed to be ubiquinone. Couples the redox reaction to proton translocation (for every two electrons transferred, four hydrogen ions are translocated across the cytoplasmic membrane), and thus conserves the redox energy in a proton gradient. This Protochlamydia amoebophila (strain UWE25) protein is NADH-quinone oxidoreductase subunit D.